Reading from the N-terminus, the 197-residue chain is Phosphoheptose isomerase (197 aa).

The region spanning 34 to 196 (MVHCLLGGNK…DRTLFPQDEQ (163 aa)) is the SIS domain. Substrate is bound at residue 49–51 (NGG). 2 residues coordinate Zn(2+): His-58 and Glu-62. Residues Glu-62, 91 to 92 (ND), 117 to 119 (STS), Ser-122, and Gln-172 each bind substrate. Zn(2+) contacts are provided by Gln-172 and His-180.

Belongs to the SIS family. GmhA subfamily. Homotetramer. Zn(2+) is required as a cofactor.

Its subcellular location is the cytoplasm. The catalysed reaction is 2 D-sedoheptulose 7-phosphate = D-glycero-alpha-D-manno-heptose 7-phosphate + D-glycero-beta-D-manno-heptose 7-phosphate. It participates in carbohydrate biosynthesis; D-glycero-D-manno-heptose 7-phosphate biosynthesis; D-glycero-alpha-D-manno-heptose 7-phosphate and D-glycero-beta-D-manno-heptose 7-phosphate from sedoheptulose 7-phosphate: step 1/1. Its function is as follows. Catalyzes the isomerization of sedoheptulose 7-phosphate in D-glycero-D-manno-heptose 7-phosphate. This chain is Phosphoheptose isomerase, found in Shewanella sediminis (strain HAW-EB3).